Reading from the N-terminus, the 1073-residue chain is Carbamoyl phosphate synthase large chain (1073 aa).

The carboxyphosphate synthetic domain stretch occupies residues P2–E403. ATP is bound by residues R129, R169, G175, G176, E208, L210, E215, G241, I242, H243, Q285, and E299. An ATP-grasp 1 domain is found at D133 to V328. Positions 285, 299, and 301 each coordinate Mg(2+). Mn(2+) contacts are provided by Q285, E299, and N301. The tract at residues V404–A553 is oligomerization domain. The tract at residues N554–N936 is carbamoyl phosphate synthetic domain. In terms of domain architecture, ATP-grasp 2 spans Q679–A870. Residues R715, H754, L756, E761, G786, V787, H788, S789, Q829, and E841 each contribute to the ATP site. Residues Q829, E841, and N843 each contribute to the Mg(2+) site. Mn(2+) contacts are provided by Q829, E841, and N843. The MGS-like domain maps to S937 to K1073. Residues S937–K1073 are allosteric domain.

This sequence belongs to the CarB family. In terms of assembly, composed of two chains; the small (or glutamine) chain promotes the hydrolysis of glutamine to ammonia, which is used by the large (or ammonia) chain to synthesize carbamoyl phosphate. Tetramer of heterodimers (alpha,beta)4. Mg(2+) serves as cofactor. The cofactor is Mn(2+).

The catalysed reaction is hydrogencarbonate + L-glutamine + 2 ATP + H2O = carbamoyl phosphate + L-glutamate + 2 ADP + phosphate + 2 H(+). The enzyme catalyses hydrogencarbonate + NH4(+) + 2 ATP = carbamoyl phosphate + 2 ADP + phosphate + 2 H(+). It participates in amino-acid biosynthesis; L-arginine biosynthesis; carbamoyl phosphate from bicarbonate: step 1/1. Its pathway is pyrimidine metabolism; UMP biosynthesis via de novo pathway; (S)-dihydroorotate from bicarbonate: step 1/3. Large subunit of the glutamine-dependent carbamoyl phosphate synthetase (CPSase). CPSase catalyzes the formation of carbamoyl phosphate from the ammonia moiety of glutamine, carbonate, and phosphate donated by ATP, constituting the first step of 2 biosynthetic pathways, one leading to arginine and/or urea and the other to pyrimidine nucleotides. The large subunit (synthetase) binds the substrates ammonia (free or transferred from glutamine from the small subunit), hydrogencarbonate and ATP and carries out an ATP-coupled ligase reaction, activating hydrogencarbonate by forming carboxy phosphate which reacts with ammonia to form carbamoyl phosphate. This is Carbamoyl phosphate synthase large chain from Escherichia coli (strain K12).